The following is a 199-amino-acid chain: Recombination protein RecR (199 aa).

The C4-type zinc finger occupies 57-72 (CSQCHNITDTDPCQIC). Positions 80-176 (TTICVVQESR…KVTRLAHGLP (97 aa)) constitute a Toprim domain.

Belongs to the RecR family.

May play a role in DNA repair. It seems to be involved in an RecBC-independent recombinational process of DNA repair. It may act with RecF and RecO. In Shouchella clausii (strain KSM-K16) (Alkalihalobacillus clausii), this protein is Recombination protein RecR.